The chain runs to 304 residues: D-tagatose-1-phosphate kinase (304 aa).

The active-site Proton acceptor is Asp250.

The protein belongs to the carbohydrate kinase PfkB family. It depends on Mg(2+) as a cofactor.

The catalysed reaction is alpha-D-tagatopyranose 1-phosphate + ATP = D-tagatofuranose 1,6-bisphosphate + ADP + H(+). Its pathway is carbohydrate degradation. With respect to regulation, activity is inhibited by tagatose-6-phosphate and fructose-6-phosphate. Its function is as follows. Kinase involved in a D-tagatose catabolic pathway. Catalyzes the phosphorylation of D-tagatose-1-phosphate (Tag-1P) to D-tagatose-1,6-bisphosphate. Can also use D-fructose-1-phosphate, with 40-fold lower catalytic efficiency, but not tagatose-6-phosphate or fructose-6-phosphate. The substrate, which occurs in a pyranose form in solution, may undergo a change to the furanose conformation after binding to the enzyme, in order to permit phosphorylation at C-6. The sequence is that of D-tagatose-1-phosphate kinase from Bacillus licheniformis (strain ATCC 14580 / DSM 13 / JCM 2505 / CCUG 7422 / NBRC 12200 / NCIMB 9375 / NCTC 10341 / NRRL NRS-1264 / Gibson 46).